The chain runs to 700 residues: MARHTPIERYRNIGISAHIDAGKTTTTERILFYTGINHKIGEVHDGAATMDWMEQEQERGITITSAATTCFWKGMENNFAEHRINIIDTPGHVDFTIEVERSMRVLDGACMVYCAVGGVQPQSETVWRQANKYKVPRLAFVNKMDRTGANFFKVVDQMKLRLKASPVPMVIPIGAEENFTGVVDLLKMKAIIWDEASQGMLFDYREIPAELLELAKEWREKMVEAAAEASEELMNKYLEEGDLTEDEIKFGIRTRTIASEIQPMYCGSAFKNKGVQRMLDAVVEFMPSPVDIPPVKGMDEDENPVVRQANDTEKFSALAFKLMTDPFVGQLTFVRVYSGVLQKGDSVYNPIRGKKERIGRIVQMHANNRQEVSEIVAGDIAACVGLKDVTTGETLCDPGAIIMLERMVFPEPVITQAVEPKTKVDQEKMGIALQRLAQEDPSFRVKTDEESGQTLIAGMGELHLEIIVDRMKREFGVEANVGKPQVAYRETIRKTVEDAEGKFVRQSGGKGQYGHVVLKIEPNEPGKGIQFIDAIKGGVVPREFIPAVEKGINEAVTSGVLAGYPVVDVKVTLHFGSYHDVDSNENAFKMAAIFGFKEGCRKAGPVILEPMMAVEVETPEDYAGNVMGDLSSRRGMVQGMEDMVGGGKAIKAEVPLSEMFGYSTTLRSMSQGRATYTMEFKHYTEAPRNVSEAIMAARAK.

One can recognise a tr-type G domain in the interval 8–290 (ERYRNIGISA…AVVEFMPSPV (283 aa)). GTP is bound by residues 17-24 (AHIDAGKT), 88-92 (DTPGH), and 142-145 (NKMD).

It belongs to the TRAFAC class translation factor GTPase superfamily. Classic translation factor GTPase family. EF-G/EF-2 subfamily.

The protein resides in the cytoplasm. Its function is as follows. Catalyzes the GTP-dependent ribosomal translocation step during translation elongation. During this step, the ribosome changes from the pre-translocational (PRE) to the post-translocational (POST) state as the newly formed A-site-bound peptidyl-tRNA and P-site-bound deacylated tRNA move to the P and E sites, respectively. Catalyzes the coordinated movement of the two tRNA molecules, the mRNA and conformational changes in the ribosome. This is Elongation factor G from Albidiferax ferrireducens (strain ATCC BAA-621 / DSM 15236 / T118) (Rhodoferax ferrireducens).